Here is a 278-residue protein sequence, read N- to C-terminus: Digeranylgeranylglyceryl phosphate synthase (278 aa).

Transmembrane regions (helical) follow at residues 17–37, 40–60, 91–111, 129–149, 153–173, 204–224, 226–246, and 257–277; these read MASFGAFIGGLIASYFNLEMV, LIFASIVVFLVCGFGNALNDI, LLVFTGLCISLFNITCFLMAV, IIGNLIVAYLTGSVFIFGGIA, IDVTIMLFLCALFAMWSREII, LLLVFAVLLSSLPYLFGFFGI, YLISVVFCDLLFLIGIFPLLI, and SRNIKIVTNLVLVAFVIGSFF.

Belongs to the UbiA prenyltransferase family. DGGGP synthase subfamily. Mg(2+) serves as cofactor.

The protein resides in the cell membrane. It carries out the reaction sn-3-O-(geranylgeranyl)glycerol 1-phosphate + (2E,6E,10E)-geranylgeranyl diphosphate = 2,3-bis-O-(geranylgeranyl)-sn-glycerol 1-phosphate + diphosphate. The protein operates within membrane lipid metabolism; glycerophospholipid metabolism. Its function is as follows. Prenyltransferase that catalyzes the transfer of the geranylgeranyl moiety of geranylgeranyl diphosphate (GGPP) to the C2 hydroxyl of (S)-3-O-geranylgeranylglyceryl phosphate (GGGP). This reaction is the second ether-bond-formation step in the biosynthesis of archaeal membrane lipids. The sequence is that of Digeranylgeranylglyceryl phosphate synthase from Methanococcus maripaludis (strain C5 / ATCC BAA-1333).